Here is a 194-residue protein sequence, read N- to C-terminus: Small ribosomal subunit protein uS4c (194 aa).

The tract at residues 13–36 (GLTSKRPRSGSDPKNQLRSGKKSQ) is disordered. The S4 RNA-binding domain maps to 82–143 (MRLDNILFRL…KQRSKALIQN (62 aa)).

The protein belongs to the universal ribosomal protein uS4 family. In terms of assembly, part of the 30S ribosomal subunit. Contacts protein S5. The interaction surface between S4 and S5 is involved in control of translational fidelity.

It is found in the plastid. The protein localises to the chloroplast. One of the primary rRNA binding proteins, it binds directly to 16S rRNA where it nucleates assembly of the body of the 30S subunit. Its function is as follows. With S5 and S12 plays an important role in translational accuracy. This Moraea spathulata (Large yellow moraea) protein is Small ribosomal subunit protein uS4c (rps4).